The primary structure comprises 285 residues: V-type proton ATPase subunit D (285 aa).

Basic and acidic residues predominate over residues 208-226 (QKTKENAEKADSVTKEEHQ). Residues 208–285 (QKTKENAEKA…ENDSDEEVIF (78 aa)) form a disordered region. The residue at position 219 (Ser-219) is a Phosphoserine. The span at 227–236 (GGSNTLQQTK) shows a compositional bias: polar residues. A compositionally biased stretch (basic and acidic residues) spans 248–263 (VGKEVINEVENSKDDT). Acidic residues predominate over residues 271–285 (TDDEEENDSDEEVIF).

Belongs to the V-ATPase D subunit family. V-ATPase is a heteromultimeric enzyme composed of a peripheral catalytic V1 complex (components A to H) attached to an integral membrane V0 proton pore complex (components: a, c, c', c'', d, e, f and VOA1).

The protein resides in the vacuole membrane. Functionally, subunit of the V1 complex of vacuolar(H+)-ATPase (V-ATPase), a multisubunit enzyme composed of a peripheral complex (V1) that hydrolyzes ATP and a membrane integral complex (V0) that translocates protons. V-ATPase is responsible for acidifying and maintaining the pH of intracellular compartments. This is V-type proton ATPase subunit D (vma8) from Schizosaccharomyces pombe (strain 972 / ATCC 24843) (Fission yeast).